A 369-amino-acid polypeptide reads, in one-letter code: 3-methylarginine biosynthesis aminotransferase ArgM (369 aa).

Residue Lys-216 is modified to N6-(pyridoxal phosphate)lysine.

It belongs to the class-I pyridoxal-phosphate-dependent aminotransferase family. Pyridoxal 5'-phosphate serves as cofactor.

The enzyme catalyses L-arginine + 2-oxoglutarate = 5-guanidino-2-oxopentanoate + L-glutamate. It carries out the reaction (3R)-5-guanidino-3-methyl-2-oxopentanoate + L-aspartate = (3R)-3-methyl-L-arginine + oxaloacetate. Its pathway is antibiotic biosynthesis. In terms of biological role, aminotransferase involved in the formation of the rare amino acid 3-methylarginine (MeArg), which is incorporated into the peptidyl nucleoside antibiotic arginomycin. Catalyzes two rounds of transamination: the transfer of the amino group from L-arginine to 2-oxoglutarate to give glutamate and 5-guanidino-2-oxopentanoic acid, which will be methylated by ArgN. Then, ArgM specifically catalyzes transamination from the donor L-aspartate to the 5-guanidino-3-methyl-2-oxopentanoic acid produced by ArgN, generating the final product, 3-methylarginine. Cannot use arginine analogs, such as D-arginine, L-homoarginine and N-methylarginine for the first transamination. The sequence is that of 3-methylarginine biosynthesis aminotransferase ArgM from Streptomyces arginensis.